The following is a 262-amino-acid chain: Putative phosphatase HI_0003 (262 aa).

The active-site Nucleophile is the aspartate 9. Aspartate 9 and asparagine 11 together coordinate Mg(2+). Phosphate-binding positions include 43–44 and lysine 189; that span reads SA. Aspartate 212 serves as a coordination point for Mg(2+). Asparagine 215 provides a ligand contact to phosphate.

The protein belongs to the HAD-like hydrolase superfamily. Cof family. Requires Mg(2+) as cofactor.

This chain is Putative phosphatase HI_0003, found in Haemophilus influenzae (strain ATCC 51907 / DSM 11121 / KW20 / Rd).